Here is a 259-residue protein sequence, read N- to C-terminus: Acyl-[acyl-carrier-protein]--UDP-N-acetylglucosamine O-acyltransferase (259 aa).

This sequence belongs to the transferase hexapeptide repeat family. LpxA subfamily. In terms of assembly, homotrimer.

It localises to the cytoplasm. The enzyme catalyses a (3R)-hydroxyacyl-[ACP] + UDP-N-acetyl-alpha-D-glucosamine = a UDP-3-O-[(3R)-3-hydroxyacyl]-N-acetyl-alpha-D-glucosamine + holo-[ACP]. The protein operates within glycolipid biosynthesis; lipid IV(A) biosynthesis; lipid IV(A) from (3R)-3-hydroxytetradecanoyl-[acyl-carrier-protein] and UDP-N-acetyl-alpha-D-glucosamine: step 1/6. Involved in the biosynthesis of lipid A, a phosphorylated glycolipid that anchors the lipopolysaccharide to the outer membrane of the cell. The chain is Acyl-[acyl-carrier-protein]--UDP-N-acetylglucosamine O-acyltransferase from Psychrobacter arcticus (strain DSM 17307 / VKM B-2377 / 273-4).